Here is a 321-residue protein sequence, read N- to C-terminus: Ribosomal RNA small subunit methyltransferase H (321 aa).

Residues 40–42 (GGH), Asp-60, Phe-84, Asp-106, and Gln-113 contribute to the S-adenosyl-L-methionine site.

This sequence belongs to the methyltransferase superfamily. RsmH family.

Its subcellular location is the cytoplasm. It carries out the reaction cytidine(1402) in 16S rRNA + S-adenosyl-L-methionine = N(4)-methylcytidine(1402) in 16S rRNA + S-adenosyl-L-homocysteine + H(+). Specifically methylates the N4 position of cytidine in position 1402 (C1402) of 16S rRNA. In Haemophilus influenzae (strain ATCC 51907 / DSM 11121 / KW20 / Rd), this protein is Ribosomal RNA small subunit methyltransferase H.